A 103-amino-acid polypeptide reads, in one-letter code: Phosphoribosyl-ATP pyrophosphatase (103 aa).

The protein belongs to the PRA-PH family.

The protein localises to the cytoplasm. It carries out the reaction 1-(5-phospho-beta-D-ribosyl)-ATP + H2O = 1-(5-phospho-beta-D-ribosyl)-5'-AMP + diphosphate + H(+). It functions in the pathway amino-acid biosynthesis; L-histidine biosynthesis; L-histidine from 5-phospho-alpha-D-ribose 1-diphosphate: step 2/9. This is Phosphoribosyl-ATP pyrophosphatase from Listeria monocytogenes serotype 4a (strain HCC23).